Here is a 561-residue protein sequence, read N- to C-terminus: Arginine--tRNA ligase (561 aa).

The 'HIGH' region motif lies at 129–139 (ANPTGPLHIGH).

Belongs to the class-I aminoacyl-tRNA synthetase family. As to quaternary structure, monomer.

It localises to the cytoplasm. The catalysed reaction is tRNA(Arg) + L-arginine + ATP = L-arginyl-tRNA(Arg) + AMP + diphosphate. The protein is Arginine--tRNA ligase of Geotalea uraniireducens (strain Rf4) (Geobacter uraniireducens).